The chain runs to 1048 residues: Bifunctional heparan sulfate N-deacetylase/N-sulfotransferase (1048 aa).

Topologically, residues 1 to 172 (MTISGGNQHN…RRCFGINVRR (172 aa)) are cytoplasmic. Residues 173–192 (CVLALLAITMVSIFYYTHYV) form a helical; Signal-anchor for type II membrane protein membrane-spanning segment. A heparan sulfate N-deacetylase region spans residues 192-752 (VDTGVFNGLI…VRHKKIWSKT (561 aa)). Residues 193–1048 (DTGVFNGLIQ…WLKDDLSTGT (856 aa)) lie on the Lumenal side of the membrane. 2 N-linked (GlcNAc...) asparagine glycosylation sites follow: N388 and N555. The interval 753–1048 (KNCDSLPKFL…WLKDDLSTGT (296 aa)) is heparan sulfate N-sulfotransferase. K768 acts as the For sulfotransferase activity in catalysis. 768–772 (KTGTT) is a 3'-phosphoadenylyl sulfate binding site. N823 is a glycosylation site (N-linked (GlcNAc...) asparagine). Position 877 (S877) interacts with 3'-phosphoadenylyl sulfate. The N-linked (GlcNAc...) asparagine glycan is linked to N892. C983 and C993 form a disulfide bridge. 998–1002 (KGRQY) is a binding site for 3'-phosphoadenylyl sulfate.

It belongs to the sulfotransferase 1 family. NDST subfamily. As to quaternary structure, monomer.

The protein localises to the golgi apparatus membrane. The catalysed reaction is alpha-D-glucosaminyl-[heparan sulfate](n) + 3'-phosphoadenylyl sulfate = N-sulfo-alpha-D-glucosaminyl-[heparan sulfate](n) + adenosine 3',5'-bisphosphate + 2 H(+). It functions in the pathway glycan metabolism; heparan sulfate biosynthesis. Its pathway is glycan metabolism; heparin biosynthesis. Its function is as follows. Essential bifunctional enzyme that catalyzes both the N-deacetylation and the N-sulfation of glucosamine (GlcNAc) of the glycosaminoglycan in heparan sulfate. Modifies the GlcNAc-GlcA disaccharide repeating sugar backbone to make N-sulfated heparosan, a prerequisite substrate for later modifications in heparin biosynthesis. Plays a role in diffusion of morphogen wingless (wg) via its role in heparan sulfate proteoglycans (HSPGs) biosynthesis, HSPGs being required for movement of wg morphogens. Required for wg signaling during both embryonic and imaginal disk development. Also required for FGF receptor signaling. This is Bifunctional heparan sulfate N-deacetylase/N-sulfotransferase (sfl) from Drosophila melanogaster (Fruit fly).